The chain runs to 444 residues: MKHFEANFDGLVGPTHNYAGLSFGNVASLNNAALVSNPKAAAKQGLQKAKALADLGMIQGMLAPQERPDLNTLRRIGFSGSDAQVLQQAAKTAPALLNACCSASSMWTANAATVSPSADTRDGKLHFTPANLVDKLHRSIEPITTGRILTATFNDPHYFYHHNHLPEHNSFGDEGAANHTRLCQEYGHAGVELFVYGQEATNPHAPKPLKFPARQTLEASMAIARLHQLEEDNCVFIQQNPAVIDQGVFHNDVIAVGNQNVLFYHEQAFLNTQAKLDEIKRKLDTELYFIEVPTAKVSINDAVKSYLFNTQIITLPSGEMAIIAPTDCQENPAVYAYLNELLSLNTPIKQVLYFDVKQSMQNGGGPACLRLRVAMNEREVAAVNQHTLLTDALFTRLNTWVEKHYRDRLSTEDLADPQLVIESRTALDELTQIMKLGSVYPFQR.

Substrate-binding positions include 19 to 28 (AGLSFGNVAS), N110, and 137 to 138 (HR). E174 is a catalytic residue. Residue R214 coordinates substrate. Residue H250 is part of the active site. Substrate contacts are provided by D252 and N362. The active-site Nucleophile is the C368.

The protein belongs to the succinylarginine dihydrolase family. In terms of assembly, homodimer.

The catalysed reaction is N(2)-succinyl-L-arginine + 2 H2O + 2 H(+) = N(2)-succinyl-L-ornithine + 2 NH4(+) + CO2. It participates in amino-acid degradation; L-arginine degradation via AST pathway; L-glutamate and succinate from L-arginine: step 2/5. In terms of biological role, catalyzes the hydrolysis of N(2)-succinylarginine into N(2)-succinylornithine, ammonia and CO(2). The polypeptide is N-succinylarginine dihydrolase (Shewanella oneidensis (strain ATCC 700550 / JCM 31522 / CIP 106686 / LMG 19005 / NCIMB 14063 / MR-1)).